Consider the following 149-residue polypeptide: Calmodulin-like protein 3 (149 aa).

4 EF-hand domains span residues 8–43, 44–79, 81–116, and 117–149; these read EQIA…LGQN, PTEA…KMKD, DSEE…LGEK, and LSDE…LVSK. Residues Asp21, Asp23, Asp25, Ser27, Glu32, Asp57, Asp59, Asn61, Thr63, Glu68, Asp94, Asp96, Asn98, Glu105, Asp130, Asp132, Asp134, Gln136, and Glu141 each coordinate Ca(2+).

It belongs to the calmodulin family. In terms of assembly, interacts with MYO10, the interaction is calcium-dependent and essential for MYO10 function in filopodial extension.

May function as a specific light chain of unconventional myosin-10 (MYO10), also enhances MYO10 translation, possibly by acting as a chaperone for the emerging MYO10 heavy chain protein. May compete with calmodulin by binding, with different affinities, to cellular substrates. The polypeptide is Calmodulin-like protein 3 (Calml3) (Mus musculus (Mouse)).